The chain runs to 601 residues: Uptake hydrogenase large subunit (601 aa).

Positions 74, 77, 580, and 583 each coordinate Ni(2+).

Belongs to the [NiFe]/[NiFeSe] hydrogenase large subunit family. In terms of assembly, heterodimer of a large and a small subunit. It depends on Ni(2+) as a cofactor.

It localises to the cell membrane. It carries out the reaction H2 + A = AH2. Functionally, this enzyme recycles the H(2) produced by nitrogenase to increase the production of ATP and to protect nitrogenase against inhibition or damage by O(2) under carbon- or phosphate-limited conditions. The protein is Uptake hydrogenase large subunit (hupL) of Azotobacter chroococcum mcd 1.